The primary structure comprises 555 residues: Anaerobic magnesium-protoporphyrin IX monomethyl ester cyclase (555 aa).

The B12-binding domain maps to 9 to 143 (NYHSGGAEIA…TAVDQGRFMA (135 aa)). One can recognise a Radical SAM core domain in the interval 191–416 (PMNKRVAIPN…MKPDAMDRGE (226 aa)). The [4Fe-4S] cluster site is built by Cys205, Cys209, and Cys212.

Belongs to the BchE family. [4Fe-4S] cluster serves as cofactor. The cofactor is adenosylcob(III)alamin.

It carries out the reaction Mg-protoporphyrin IX 13-monomethyl ester + 3 S-adenosyl-L-methionine + H2O = 3,8-divinyl protochlorophyllide a + 3 5'-deoxyadenosine + 3 L-methionine + 4 H(+). The protein operates within porphyrin-containing compound metabolism; bacteriochlorophyll biosynthesis (light-independent). In terms of biological role, involved in the tetrapyrrole biosynthetic pathways leading to chlorophyll and bacteriochlorophyll (BChl). Catalyzes the anaerobic formation of the isocyclic ring (E-ring) in Mg-protoporphyrin monomethyl ester (MPE) to yield protochlorophyllide a (PChlide a) via a six-electron oxidation and the formation of an oxo group at position C13 using oxygen from a water molecule. The chain is Anaerobic magnesium-protoporphyrin IX monomethyl ester cyclase (bchE) from Rubrivivax gelatinosus (Rhodocyclus gelatinosus).